The sequence spans 174 residues: Cathepsin B-like cysteine proteinase 3 (174 aa).

Intrachain disulfides connect Cys22–Cys55 and Cys30–Cys42. Catalysis depends on residues His122 and Asn142.

It belongs to the peptidase C1 family.

In terms of biological role, expression of the protease correlates with blood-feeding and suggests a role for the protease in blood digestion. This chain is Cathepsin B-like cysteine proteinase 3 (CP-3), found in Ostertagia ostertagi (Brown stomach worm).